A 359-amino-acid chain; its full sequence is F-box protein At5g49610 (359 aa).

Residues 3–52 (NQKGALFPDEVILQILARLPVKSLFRFKSVCKSWYRLPSDKYFTSLFNQL) enclose the F-box domain.

As to quaternary structure, part of a SCF (SKP1-cullin-F-box) protein ligase complex. Interacts with SKP1A, SKP1B, ASK11, ASK12, ASK13 and ASK14.

It participates in protein modification; protein ubiquitination. This is F-box protein At5g49610 from Arabidopsis thaliana (Mouse-ear cress).